The sequence spans 351 residues: Mitogen-activated protein kinase 2 (351 aa).

One can recognise a Protein kinase domain in the interval 16–304; sequence YEILDVIGEG…AEEALQHNYL (289 aa). ATP is bound by residues 22-30 and Lys45; that span reads IGEGAYGIV. The active-site Proton acceptor is Asp140. Position 176 is a phosphothreonine (Thr176). The short motif at 176–178 is the TXY element; that stretch reads TEY. A Phosphotyrosine modification is found at Tyr178.

The protein belongs to the protein kinase superfamily. CMGC Ser/Thr protein kinase family. MAP kinase subfamily. Mg(2+) is required as a cofactor. Mn(2+) serves as cofactor. Post-translationally, dually phosphorylated on Thr-176 and Tyr-178, which activates the enzyme.

The protein resides in the nucleus. It catalyses the reaction L-seryl-[protein] + ATP = O-phospho-L-seryl-[protein] + ADP + H(+). It carries out the reaction L-threonyl-[protein] + ATP = O-phospho-L-threonyl-[protein] + ADP + H(+). Its activity is regulated as follows. Activated by tyrosine and threonine phosphorylation. Inhibited by the MEK inhibitor U0126 but not by the p38 inhibitor SB203580. Cobalt abolishes kinase activity, while calcium, copper and nickel have little effect on kinase activity. Its function is as follows. Serine-threonine protein kinase which may be involved in pheromone signaling. Functionally complements the MAPK pheromone signaling pathway in S.cerevisiae. The polypeptide is Mitogen-activated protein kinase 2 (Pneumocystis carinii).